The primary structure comprises 2120 residues: Separin (2120 aa).

Residue Ser1126 is modified to Phosphoserine. Residues 1299–1355 (IKSVPGSEPSKTQGQKRSGRGRQKLASAPLRLNNTSQKGLEGRGLPCTPKPPDRIRQ) are disordered. Phosphoserine occurs at positions 1396 and 1399. Disordered stretches follow at residues 1412–1485 (AEEP…PEIM) and 1507–1561 (GSDG…PRLR). Composition is skewed to basic residues over residues 1418–1432 (RGTA…RKGL) and 1454–1463 (RSRRAKKVAS). Over residues 1464–1473 (RHCEERRPQR) the composition is skewed to basic and acidic residues. Position 1508 is a phosphoserine (Ser1508). A compositionally biased stretch (basic and acidic residues) spans 1548-1558 (PDKESDKDLGP). The Peptidase C50 domain occupies 1945–2040 (PRSTFYVLNP…SAALAVRGNL (96 aa)). Cys2029 is an active-site residue.

Interacts with PTTG1. Interacts with RAD21. Autocleaves. This function, which is not essential for its protease activity, is unknown. In terms of processing, phosphorylated by CDK1. There are 8 Ser/Thr phosphorylation sites. Among them, Ser-1126 phosphorylation is the major site, which conducts to the enzyme inactivation.

It is found in the cytoplasm. The protein localises to the nucleus. The catalysed reaction is All bonds known to be hydrolyzed by this endopeptidase have arginine in P1 and an acidic residue in P4. P6 is often occupied by an acidic residue or by a hydroxy-amino-acid residue, the phosphorylation of which enhances cleavage.. Regulated by at least two independent mechanisms. First, it is inactivated via its interaction with securin/PTTG1, which probably covers its active site. The association with PTTG1 is not only inhibitory, since PTTG1 is also required for activating it, the enzyme being inactive in cells in which PTTG1 is absent. PTTG1 degradation at anaphase, liberates it and triggers RAD21 cleavage. Second, phosphorylation at Ser-1126 inactivates it. The complete phosphorylation during mitosis, is removed when cells undergo anaphase. Activation of the enzyme at the metaphase-anaphase transition probably requires the removal of both securin and inhibitory phosphate. In terms of biological role, caspase-like protease, which plays a central role in the chromosome segregation by cleaving the SCC1/RAD21 subunit of the cohesin complex at the onset of anaphase. During most of the cell cycle, it is inactivated by different mechanisms. The sequence is that of Separin (ESPL1) from Homo sapiens (Human).